A 156-amino-acid chain; its full sequence is Small ribosomal subunit protein uS7 (156 aa).

Belongs to the universal ribosomal protein uS7 family. In terms of assembly, part of the 30S ribosomal subunit. Contacts proteins S9 and S11.

One of the primary rRNA binding proteins, it binds directly to 16S rRNA where it nucleates assembly of the head domain of the 30S subunit. Is located at the subunit interface close to the decoding center, probably blocks exit of the E-site tRNA. The protein is Small ribosomal subunit protein uS7 of Wigglesworthia glossinidia brevipalpis.